The following is a 240-amino-acid chain: Large ribosomal subunit protein uL2 (240 aa).

Over residues 1 to 11 (MGKRLISQNRG) the composition is skewed to polar residues. Disordered regions lie at residues 1–31 (MGKR…VKYR) and 206–240 (GGGR…TGRK). Composition is skewed to basic residues over residues 13 to 28 (GTPK…KGAV) and 224 to 240 (SPGR…TGRK).

It belongs to the universal ribosomal protein uL2 family. Part of the 50S ribosomal subunit. Forms a bridge to the 30S subunit in the 70S ribosome.

Its function is as follows. One of the primary rRNA binding proteins. Required for association of the 30S and 50S subunits to form the 70S ribosome, for tRNA binding and peptide bond formation. It has been suggested to have peptidyltransferase activity; this is somewhat controversial. Makes several contacts with the 16S rRNA in the 70S ribosome. The chain is Large ribosomal subunit protein uL2 from Methanococcus maripaludis (strain C6 / ATCC BAA-1332).